We begin with the raw amino-acid sequence, 196 residues long: MQRIASIHRQTAETDVHIHLNLDGHGQYNVKTGIGFFDHMLDQLFRHSLIDCDVTVKGDLHIDPHHTIEDCALALGQAVQQALGDKAGITRFSHAYAPMDEALSRVAIDISGRPYLVWHSAFTQPRLGDLDTEMLEHWFLSFAQGAGLTLHVETLYGRNNHHIAESLFKALALALRQAVAIDAGKQGRIPSTKGSL.

This sequence belongs to the imidazoleglycerol-phosphate dehydratase family.

The protein resides in the cytoplasm. The catalysed reaction is D-erythro-1-(imidazol-4-yl)glycerol 3-phosphate = 3-(imidazol-4-yl)-2-oxopropyl phosphate + H2O. Its pathway is amino-acid biosynthesis; L-histidine biosynthesis; L-histidine from 5-phospho-alpha-D-ribose 1-diphosphate: step 6/9. This Zymomonas mobilis subsp. mobilis (strain ATCC 31821 / ZM4 / CP4) protein is Imidazoleglycerol-phosphate dehydratase.